A 250-amino-acid polypeptide reads, in one-letter code: 5-oxoprolinase subunit A (250 aa).

It belongs to the LamB/PxpA family. Forms a complex composed of PxpA, PxpB and PxpC.

The enzyme catalyses 5-oxo-L-proline + ATP + 2 H2O = L-glutamate + ADP + phosphate + H(+). In terms of biological role, catalyzes the cleavage of 5-oxoproline to form L-glutamate coupled to the hydrolysis of ATP to ADP and inorganic phosphate. The polypeptide is 5-oxoprolinase subunit A (Pseudomonas fluorescens (strain ATCC BAA-477 / NRRL B-23932 / Pf-5)).